A 286-amino-acid polypeptide reads, in one-letter code: Energy-coupling factor transporter ATP-binding protein EcfA2 (286 aa).

The region spanning 3–246 is the ABC transporter domain; sequence IRFDNVSYTY…KEKLADWHIA (244 aa). Residue 40–47 coordinates ATP; that stretch reads GQTGSGKS.

The protein belongs to the ABC transporter superfamily. Energy-coupling factor EcfA family. In terms of assembly, forms a stable energy-coupling factor (ECF) transporter complex composed of 2 membrane-embedded substrate-binding proteins (S component), 2 ATP-binding proteins (A component) and 2 transmembrane proteins (T component).

The protein localises to the cell membrane. In terms of biological role, ATP-binding (A) component of a common energy-coupling factor (ECF) ABC-transporter complex. Unlike classic ABC transporters this ECF transporter provides the energy necessary to transport a number of different substrates. This chain is Energy-coupling factor transporter ATP-binding protein EcfA2, found in Staphylococcus aureus (strain bovine RF122 / ET3-1).